The following is a 480-amino-acid chain: MPTMGGLHQGHGELIRRASEQGPVLVSVFVNPLQFGPAEDFDRYPRTLEADRGLAECCGAHALWAPSVDAIYPSGLPSAVSRSAPAGLQTHLCGASRPGHFDGVVTVVARLLQLVEPSCLWLGEKDWQQLVILRRLVVDLDLGVVVKGVPTVRESDGLALSSRNQYLFPADRARAAALPAALRHADPSDPESSVRQSLAKAGLEVEYVERVDPRTLQPCGPETAISLLAAAVRCGTTRLIDHVFLMTRQPLVAIDGPAGAGKSTVTRAFAERMGLVYLDTGAMYRSVTWLVQQNGVDHQDAVSIAPLLNDLDLQLKSLPGGGQQVLVNGQDVSDAIRSPEVTASVSAVAAHRCVRQALTAQQKAMGAKGGLVAEGRDIGTAVFPDADLKVFLTATVGERARRRALDLEQRGFPVPERSELEAQIAERDHLDSTREEAPLVQADDALELVTDGMSIEAVIDALVGQFRSRVGEEAWPTPAG.

The segment at 1–243 (MPTMGGLHQG…CGTTRLIDHV (243 aa)) is pantoate--beta-alanine ligase. Position 4-11 (4-11 (MGGLHQGH)) interacts with ATP. H11 functions as the Proton donor in the catalytic mechanism. Q34 contacts (R)-pantoate. Q34 serves as a coordination point for beta-alanine. ATP is bound at residue 123–126 (GEKD). Residue Q129 coordinates (R)-pantoate. ATP-binding positions include V152 and 160–163 (LSSR). A cytidylate kinase region spans residues 244 to 480 (FLMTRQPLVA…GEEAWPTPAG (237 aa)).

The protein in the N-terminal section; belongs to the pantothenate synthetase family. This sequence in the C-terminal section; belongs to the cytidylate kinase family. Type 1 subfamily.

It localises to the cytoplasm. The catalysed reaction is (R)-pantoate + beta-alanine + ATP = (R)-pantothenate + AMP + diphosphate + H(+). The enzyme catalyses CMP + ATP = CDP + ADP. It catalyses the reaction dCMP + ATP = dCDP + ADP. Its pathway is cofactor biosynthesis; (R)-pantothenate biosynthesis; (R)-pantothenate from (R)-pantoate and beta-alanine: step 1/1. Its function is as follows. Catalyzes the condensation of pantoate with beta-alanine in an ATP-dependent reaction via a pantoyl-adenylate intermediate. In terms of biological role, catalyzes the transfer of a phosphate group from ATP to either CMP or dCMP to form CDP or dCDP and ADP, respectively. This Synechococcus sp. (strain CC9605) protein is Bifunctional pantoate ligase/cytidylate kinase.